Here is a 55-residue protein sequence, read N- to C-terminus: Lantibiotic nisin-U (55 aa).

A propeptide spanning residues 1 to 24 (MNNEDFNLDLIKISKENNSGASPR) is cleaved from the precursor. 2,3-didehydrobutyrine is present on Thr26. The segment at residues 27–31 (SKSLC) is a cross-link (lanthionine (Ser-Cys)). Ser29 carries the post-translational modification 2,3-didehydroalanine (Ser). Cross-links (beta-methyllanthionine (Thr-Cys)) lie at residues 32 to 35 (TPGC), 37 to 43 (TGILMTC), 47 to 50 (TATC), and 49 to 52 (TCGC). Thr42 is subject to 2,3-didehydrobutyrine.

In terms of processing, maturation of lantibiotics involves the enzymatic conversion of Thr, and Ser into dehydrated AA and the formation of thioether bonds with cysteine. This is followed by membrane translocation and cleavage of the modified precursor.

Its subcellular location is the secreted. Functionally, lanthionine-containing peptide antibiotic (lantibiotic) active on Gram-positive bacteria. The bactericidal activity of lantibiotics is based on depolarization of energized bacterial cytoplasmic membranes, initiated by the formation of aqueous transmembrane pores. The chain is Lantibiotic nisin-U (nsuA) from Streptococcus uberis.